Here is a 469-residue protein sequence, read N- to C-terminus: NADH-quinone oxidoreductase subunit 13 (469 aa).

14 helical membrane-spanning segments follow: residues 1–21 (MVVL…LGLP), 23–43 (ALGV…FLTH), 47–67 (VAHA…AFGL), 69–89 (GLSA…ALVA), 91–111 (VEGR…GLFA), 115–135 (LLVF…MLYL), 144–164 (ALYT…AAVL), 190–210 (AFWV…LFPL), 258–278 (GLLL…AFAA), 284–304 (LLAY…FSGT), 308–328 (AMGG…LFLL), 354–374 (LAAL…LSGF), 390–410 (WLAA…LTAF), and 430–450 (WGFA…PGYF).

This sequence belongs to the complex I subunit 4 family. In terms of assembly, NDH-1 is composed of 15 different subunits, Nqo1 to Nqo15. The complex has a L-shaped structure, with the hydrophobic arm (subunits Nqo7, Nqo8 and Nqo10 to Nqo14) embedded in the membrane and the hydrophilic peripheral arm (subunits Nqo1 to Nqo6, Nqo9 and Nqo15) protruding into the bacterial cytoplasm. The hydrophilic domain contains all the redox centers.

Its subcellular location is the cell inner membrane. The enzyme catalyses a quinone + NADH + 5 H(+)(in) = a quinol + NAD(+) + 4 H(+)(out). Its function is as follows. NDH-1 shuttles electrons from NADH, via FMN and iron-sulfur (Fe-S) centers, to quinones in the respiratory chain. The immediate electron acceptor for the enzyme in this species is menaquinone. Couples the redox reaction to proton translocation (for every two electrons transferred, four hydrogen ions are translocated across the cytoplasmic membrane), and thus conserves the redox energy in a proton gradient required for the synthesis of ATP. This is NADH-quinone oxidoreductase subunit 13 (nqo13) from Thermus thermophilus (strain ATCC 27634 / DSM 579 / HB8).